The following is a 313-amino-acid chain: uncharacterized protein (313 aa).

The next 3 helical transmembrane spans lie at 19–41 (GLAV…AGFL), 51–68 (AIIG…IFFL), and 81–103 (IAEF…DFAI).

It is found in the cell membrane. This is an uncharacterized protein from Aquifex aeolicus (strain VF5).